Reading from the N-terminus, the 120-residue chain is Large ribosomal subunit protein bL17 (120 aa).

Belongs to the bacterial ribosomal protein bL17 family. Part of the 50S ribosomal subunit. Contacts protein L32.

The protein is Large ribosomal subunit protein bL17 of Mesomycoplasma hyopneumoniae (strain 7448) (Mycoplasma hyopneumoniae).